A 218-amino-acid polypeptide reads, in one-letter code: Large ribosomal subunit protein uL3 (218 aa).

This sequence belongs to the universal ribosomal protein uL3 family. As to quaternary structure, part of the 50S ribosomal subunit. Forms a cluster with proteins L14 and L19.

Its function is as follows. One of the primary rRNA binding proteins, it binds directly near the 3'-end of the 23S rRNA, where it nucleates assembly of the 50S subunit. The sequence is that of Large ribosomal subunit protein uL3 from Rhodococcus jostii (strain RHA1).